We begin with the raw amino-acid sequence, 291 residues long: Undecaprenyl-diphosphatase 2 (291 aa).

A run of 6 helical transmembrane segments spans residues 39 to 59, 85 to 105, 118 to 138, 203 to 223, 231 to 251, and 262 to 282; these read PGAA…LIYF, AQMG…GVTL, ITAT…RLAA, FLLA…DAAA, PTVF…AWFM, and FVWY…TGAL.

This sequence belongs to the UppP family.

Its subcellular location is the cell membrane. The catalysed reaction is di-trans,octa-cis-undecaprenyl diphosphate + H2O = di-trans,octa-cis-undecaprenyl phosphate + phosphate + H(+). Functionally, catalyzes the dephosphorylation of undecaprenyl diphosphate (UPP). Confers resistance to bacitracin. The chain is Undecaprenyl-diphosphatase 2 from Streptomyces avermitilis (strain ATCC 31267 / DSM 46492 / JCM 5070 / NBRC 14893 / NCIMB 12804 / NRRL 8165 / MA-4680).